The following is a 395-amino-acid chain: Elongation factor Tu (395 aa).

The tr-type G domain maps to 10–205; sequence KPHVNIGTIG…AVDSYIPMPE (196 aa). The segment at 19–26 is G1; sequence GHIDHGKT. 19–26 contacts GTP; that stretch reads GHIDHGKT. A Mg(2+)-binding site is contributed by T26. Residues 61–65 are G2; it reads GITIA. The tract at residues 82–85 is G3; it reads DCPG. GTP contacts are provided by residues 82-86 and 137-140; these read DCPGH and NKVD. Positions 137–140 are G4; sequence NKVD. A G5 region spans residues 175–177; sequence SAL.

It belongs to the TRAFAC class translation factor GTPase superfamily. Classic translation factor GTPase family. EF-Tu/EF-1A subfamily. Monomer.

The protein resides in the cytoplasm. The catalysed reaction is GTP + H2O = GDP + phosphate + H(+). Its function is as follows. GTP hydrolase that promotes the GTP-dependent binding of aminoacyl-tRNA to the A-site of ribosomes during protein biosynthesis. In Solibacter usitatus (strain Ellin6076), this protein is Elongation factor Tu.